Reading from the N-terminus, the 447-residue chain is Probable glycine dehydrogenase (decarboxylating) subunit 1 (447 aa).

It belongs to the GcvP family. N-terminal subunit subfamily. The glycine cleavage system is composed of four proteins: P, T, L and H. In this organism, the P 'protein' is a heterodimer of two subunits.

It catalyses the reaction N(6)-[(R)-lipoyl]-L-lysyl-[glycine-cleavage complex H protein] + glycine + H(+) = N(6)-[(R)-S(8)-aminomethyldihydrolipoyl]-L-lysyl-[glycine-cleavage complex H protein] + CO2. In terms of biological role, the glycine cleavage system catalyzes the degradation of glycine. The P protein binds the alpha-amino group of glycine through its pyridoxal phosphate cofactor; CO(2) is released and the remaining methylamine moiety is then transferred to the lipoamide cofactor of the H protein. This Beijerinckia indica subsp. indica (strain ATCC 9039 / DSM 1715 / NCIMB 8712) protein is Probable glycine dehydrogenase (decarboxylating) subunit 1.